A 20-amino-acid polypeptide reads, in one-letter code: Superoxide dismutase [Mn], mitochondrial (20 aa).

The protein belongs to the iron/manganese superoxide dismutase family. In terms of assembly, homotetramer. Requires Mn(2+) as cofactor.

It localises to the mitochondrion matrix. The catalysed reaction is 2 superoxide + 2 H(+) = H2O2 + O2. Functionally, destroys superoxide anion radicals which are normally produced within the cells and which are toxic to biological systems. This is Superoxide dismutase [Mn], mitochondrial (SODA) from Hordeum vulgare (Barley).